The sequence spans 711 residues: Serine/threonine-protein kinase ATG1b (711 aa).

One can recognise a Protein kinase domain in the interval Tyr-20–Leu-277. ATP is bound by residues Ile-26–Val-34 and Lys-49. Asp-142 acts as the Proton acceptor in catalysis. Disordered regions lie at residues Leu-318–Met-342 and Phe-383–Gln-419. Residues Phe-383–Gln-393 show a composition bias toward basic and acidic residues. A compositionally biased stretch (polar residues) spans Phe-394–Arg-410. The AIM (Atg8-family-interacting motif) motif lies at Tyr-421–Ile-424.

This sequence belongs to the protein kinase superfamily. Ser/Thr protein kinase family.

Its subcellular location is the cytoplasmic vesicle. It localises to the autophagosome. Serine/threonine protein kinase involved in autophagy. The ATG1-ATG13 protein kinase complex regulates downstream events required for autophagosome enclosure and/or vacuolar delivery. In Arabidopsis thaliana (Mouse-ear cress), this protein is Serine/threonine-protein kinase ATG1b.